The sequence spans 114 residues: Translation initiation factor 1A (114 aa).

An S1-like domain is found at 19–91 (SEFRLPGEGE…EKGDIVHKYE (73 aa)).

It belongs to the eIF-1A family.

Its function is as follows. Seems to be required for maximal rate of protein biosynthesis. Enhances ribosome dissociation into subunits and stabilizes the binding of the initiator Met-tRNA(I) to 40 S ribosomal subunits. The protein is Translation initiation factor 1A (eIF1A) of Pyrobaculum aerophilum (strain ATCC 51768 / DSM 7523 / JCM 9630 / CIP 104966 / NBRC 100827 / IM2).